The sequence spans 71 residues: Small ribosomal subunit protein bS21 (71 aa).

This sequence belongs to the bacterial ribosomal protein bS21 family.

The chain is Small ribosomal subunit protein bS21 from Acinetobacter baylyi (strain ATCC 33305 / BD413 / ADP1).